The chain runs to 465 residues: ATP synthase subunit beta (465 aa).

152-159 (GGAGVGKT) is an ATP binding site.

It belongs to the ATPase alpha/beta chains family. As to quaternary structure, F-type ATPases have 2 components, CF(1) - the catalytic core - and CF(0) - the membrane proton channel. CF(1) has five subunits: alpha(3), beta(3), gamma(1), delta(1), epsilon(1). CF(0) has three main subunits: a(1), b(2) and c(9-12). The alpha and beta chains form an alternating ring which encloses part of the gamma chain. CF(1) is attached to CF(0) by a central stalk formed by the gamma and epsilon chains, while a peripheral stalk is formed by the delta and b chains.

Its subcellular location is the cell inner membrane. It carries out the reaction ATP + H2O + 4 H(+)(in) = ADP + phosphate + 5 H(+)(out). Its function is as follows. Produces ATP from ADP in the presence of a proton gradient across the membrane. The catalytic sites are hosted primarily by the beta subunits. The polypeptide is ATP synthase subunit beta (Campylobacter fetus subsp. fetus (strain 82-40)).